The following is a 306-amino-acid chain: MPNPLYRQHIISISDLSREQLECLLQTALKLKAHPRGDLLEGKLIGSCFFEPSTRTRLSFETAVQRLGGKVIGFSDGANTSAKKGETLADTARIISGYTDAIIQRHPKDGAARVAAEFSRVPVINAGDGTNQHPSQTLLDLVTIYETQGRLDKLKIAMAGDLKYGRTVHSLCQALKRWGCEFAFVSPPSLAMPDYITEELDEAGCRYRILGSLEEAAEWADILYMTRVQRERFDEQEFAKIQGKFNLDASMLARAKPNLRVLHPLPRVDEIHPDVDATPHAYYFEQATNGVYARMAILSLVLNEEV.

The carbamoyl phosphate site is built by R55 and T56. K84 lines the L-aspartate pocket. Carbamoyl phosphate is bound by residues R105, H133, and Q136. L-aspartate contacts are provided by R166 and R227. L265 and P266 together coordinate carbamoyl phosphate.

It belongs to the aspartate/ornithine carbamoyltransferase superfamily. ATCase family. Heterododecamer (2C3:3R2) of six catalytic PyrB chains organized as two trimers (C3), and six regulatory PyrI chains organized as three dimers (R2).

It carries out the reaction carbamoyl phosphate + L-aspartate = N-carbamoyl-L-aspartate + phosphate + H(+). The protein operates within pyrimidine metabolism; UMP biosynthesis via de novo pathway; (S)-dihydroorotate from bicarbonate: step 2/3. Catalyzes the condensation of carbamoyl phosphate and aspartate to form carbamoyl aspartate and inorganic phosphate, the committed step in the de novo pyrimidine nucleotide biosynthesis pathway. In Neisseria meningitidis serogroup C / serotype 2a (strain ATCC 700532 / DSM 15464 / FAM18), this protein is Aspartate carbamoyltransferase catalytic subunit.